The chain runs to 635 residues: Threonine--tRNA ligase (635 aa).

The TGS domain occupies 1–61; the sequence is MINISFPDGS…DNDCKLRILT (61 aa). The interval 242–533 is catalytic; that stretch reads DHRKLGRELD…LIEEYAGRFP (292 aa). 3 residues coordinate Zn(2+): C333, H384, and H510.

Belongs to the class-II aminoacyl-tRNA synthetase family. As to quaternary structure, homodimer. Zn(2+) serves as cofactor.

Its subcellular location is the cytoplasm. It catalyses the reaction tRNA(Thr) + L-threonine + ATP = L-threonyl-tRNA(Thr) + AMP + diphosphate + H(+). Its function is as follows. Catalyzes the attachment of threonine to tRNA(Thr) in a two-step reaction: L-threonine is first activated by ATP to form Thr-AMP and then transferred to the acceptor end of tRNA(Thr). Also edits incorrectly charged L-seryl-tRNA(Thr). This is Threonine--tRNA ligase from Rickettsia africae (strain ESF-5).